Consider the following 240-residue polypeptide: Eukaryotic translation initiation factor 4E-2 (240 aa).

A disordered region spans residues 1-29 (MVVMDSPVSGRMADQNIDPNTTTSPSPIE). Positions 17-26 (IDPNTTTSPS) are enriched in polar residues. EIF4G-binding regions lie at residues 65 to 68 (HCFQ) and 75 to 111 (FDNP…NNIH). MRNA is bound by residues 83 to 88 (NQVIWG), Lys115, and 133 to 134 (WE). The cysteines at positions 138 and 176 are disulfide-linked. The tract at residues 159-168 (NTLLALVGEQ) is EIF4G-binding. MRNA is bound by residues 183–188 (RTRGDR) and 228–232 (KTLDR).

Belongs to the eukaryotic initiation factor 4E family. In terms of assembly, EIF4F is a multi-subunit complex, the composition of which varies with external and internal environmental conditions. It is composed of at least EIF4A, EIF4E and EIF4G. EIF4E is also known to interact with other partners. In higher plants two isoforms of EIF4F have been identified, named isoform EIF4F and isoform EIF(iso)4F. Isoform EIF4F has subunits p220 and p26, whereas isoform EIF(iso)4F has subunits p82 and p28. According to the redox status, the Cys-138-Cys-176 disulfide bridge may have a role in regulating protein function by affecting its ability to bind capped mRNA.

The protein resides in the nucleus. Its subcellular location is the cytoplasm. In terms of biological role, component of the protein complex eIF4F, which is involved in the recognition of the mRNA cap, ATP-dependent unwinding of 5'-terminal secondary structure and recruitment of mRNA to the ribosome. Recognizes and binds the 7-methylguanosine-containing mRNA cap during an early step in the initiation of protein synthesis and facilitates ribosome binding by inducing the unwinding of the mRNAs secondary structures. This is Eukaryotic translation initiation factor 4E-2 from Arabidopsis thaliana (Mouse-ear cress).